The chain runs to 214 residues: Charged multivesicular body protein 2b (214 aa).

The stretch at 16-55 (EQNKELRGTQRAITRDRAALEKQEKQLEMEIKKMAKAGNK) forms a coiled coil. The disordered stretch occupies residues 178 to 203 (MAKAPSAAKGLPSTSASKSSGISDEE). The segment covering 189–199 (PSTSASKSSGI) has biased composition (polar residues). The short motif at 202–212 (EEIERQLKALG) is the MIT-interacting motif element.

The protein belongs to the SNF7 family. In terms of assembly, probable core component of the endosomal sorting required for transport complex III (ESCRT-III). ESCRT-III components are thought to multimerize to form a flat lattice on the perimeter membrane of the endosome.

It localises to the cytoplasm. The protein resides in the cytosol. Its subcellular location is the late endosome membrane. Functionally, probable core component of the endosomal sorting required for transport complex III (ESCRT-III) which is involved in multivesicular bodies (MVBs) formation and sorting of endosomal cargo proteins into MVBs. MVBs contain intraluminal vesicles (ILVs) that are generated by invagination and scission from the limiting membrane of the endosome and mostly are delivered to lysosomes enabling degradation of membrane proteins, such as stimulated growth factor receptors, lysosomal enzymes and lipids. In Xenopus tropicalis (Western clawed frog), this protein is Charged multivesicular body protein 2b (chmp2b).